Here is a 312-residue protein sequence, read N- to C-terminus: Protein dif-1 (312 aa).

Solcar repeat units lie at residues 2-93, 102-193, and 203-289; these read SDVL…GKWL, MTFI…LKKK, and LSPG…TLAA. Transmembrane regions (helical) follow at residues 5–25, 69–89, 104–124, 172–192, 209–229, and 261–282; these read LLNFIAGGVGGSCTVIVGHPF, MAAPLVGVSPLFAVFFGGCAV, FIQNANAGALAGVFTTIVMVP, TLLRDIPASAAYLSVYEYLKK, LMAGGLAGIANWGVCIPADVL, and LFKGFWPVMLRAFPANAACFFG.

Belongs to the mitochondrial carrier (TC 2.A.29) family.

Its subcellular location is the mitochondrion inner membrane. Its function is as follows. Seems to play a role in the maintenance of tissue differentiation in the developing embryo, but not for its initiation. This Caenorhabditis elegans protein is Protein dif-1 (dif-1).